We begin with the raw amino-acid sequence, 573 residues long: DNA ligase (573 aa).

An ATP-binding site is contributed by Glu250. Lys252 functions as the N6-AMP-lysine intermediate in the catalytic mechanism. Positions 257, 272, 301, 342, 432, and 438 each coordinate ATP.

It belongs to the ATP-dependent DNA ligase family. Requires Mg(2+) as cofactor.

The catalysed reaction is ATP + (deoxyribonucleotide)n-3'-hydroxyl + 5'-phospho-(deoxyribonucleotide)m = (deoxyribonucleotide)n+m + AMP + diphosphate.. In terms of biological role, DNA ligase that seals nicks in double-stranded DNA during DNA replication, DNA recombination and DNA repair. The sequence is that of DNA ligase from Methanococcus maripaludis (strain DSM 14266 / JCM 13030 / NBRC 101832 / S2 / LL).